A 200-amino-acid polypeptide reads, in one-letter code: Recombination protein RecR (200 aa).

The segment at 57 to 72 (CRQCRTLTEQELCPQC) adopts a C4-type zinc-finger fold. Residues 80–175 (TQLCVVEGPT…VASRIAHGVP (96 aa)) form the Toprim domain.

Belongs to the RecR family.

Its function is as follows. May play a role in DNA repair. It seems to be involved in an RecBC-independent recombinational process of DNA repair. It may act with RecF and RecO. The sequence is that of Recombination protein RecR from Pseudomonas putida (strain ATCC 700007 / DSM 6899 / JCM 31910 / BCRC 17059 / LMG 24140 / F1).